Consider the following 184-residue polypeptide: NADH-quinone oxidoreductase subunit B (184 aa).

The [4Fe-4S] cluster site is built by Cys37, Cys38, Cys103, and Cys132.

The protein belongs to the complex I 20 kDa subunit family. As to quaternary structure, NDH-1 is composed of 14 different subunits. Subunits NuoB, C, D, E, F, and G constitute the peripheral sector of the complex. The cofactor is [4Fe-4S] cluster.

The protein resides in the cell membrane. It catalyses the reaction a quinone + NADH + 5 H(+)(in) = a quinol + NAD(+) + 4 H(+)(out). Its function is as follows. NDH-1 shuttles electrons from NADH, via FMN and iron-sulfur (Fe-S) centers, to quinones in the respiratory chain. The immediate electron acceptor for the enzyme in this species is believed to be a menaquinone. Couples the redox reaction to proton translocation (for every two electrons transferred, four hydrogen ions are translocated across the cytoplasmic membrane), and thus conserves the redox energy in a proton gradient. This chain is NADH-quinone oxidoreductase subunit B, found in Nocardioides sp. (strain ATCC BAA-499 / JS614).